Here is a 645-residue protein sequence, read N- to C-terminus: Acetyl-coenzyme A synthetase (645 aa).

Residues 190–193 (RGGR) and Thr-308 contribute to the CoA site. Residues 384–386 (GEP), 408–413 (DTWWQT), Asp-497, and Arg-512 contribute to the ATP site. Ser-520 contributes to the CoA binding site. Arg-523 is a binding site for ATP. The Mg(2+) site is built by Val-534, His-536, and Val-539. The residue at position 606 (Lys-606) is an N6-acetyllysine.

Belongs to the ATP-dependent AMP-binding enzyme family. The cofactor is Mg(2+). Acetylated. Deacetylation by the SIR2-homolog deacetylase activates the enzyme.

It carries out the reaction acetate + ATP + CoA = acetyl-CoA + AMP + diphosphate. In terms of biological role, catalyzes the conversion of acetate into acetyl-CoA (AcCoA), an essential intermediate at the junction of anabolic and catabolic pathways. AcsA undergoes a two-step reaction. In the first half reaction, AcsA combines acetate with ATP to form acetyl-adenylate (AcAMP) intermediate. In the second half reaction, it can then transfer the acetyl group from AcAMP to the sulfhydryl group of CoA, forming the product AcCoA. This Alkalilimnicola ehrlichii (strain ATCC BAA-1101 / DSM 17681 / MLHE-1) protein is Acetyl-coenzyme A synthetase.